Consider the following 293-residue polypeptide: MPVPDHLLLELERGQRWRADGTYRGRYAPSPTGALHLGNLQTALLSWLQARQAGGVWLLRIDDLDTPRNRPGAVEAIQADLHWLGLDWDGEPILQSCRRGLYASWLSWFRRSGALFPCRCSRRELAGLARYPGTCRDGGAGWGWRDRRLPSWRLRVPSRDPDGSGDVVVRRADGFIAYQLATVIDELALGITDVVRGEDLREALPAQRSVYRALQQQPPRFHHGPLRCDAEGRKLSKREASSGLMALRELGLDAPAVVGLLASGLGYGPPGARLSAIELLEDLTQKGIRAGHS.

L-glutamate contacts are provided by residues 26 to 30 and aspartate 62; that span reads RYAPS. Residues 29–39 carry the 'HIGH' region motif; sequence PSPTGALHLGN. Zn(2+) is bound by residues cysteine 118, cysteine 120, tyrosine 131, and cysteine 135. Positions 178 and 196 each coordinate L-glutamate. Positions 234-238 match the 'KMSKS' region motif; it reads KLSKR. Lysine 237 is a binding site for ATP.

It belongs to the class-I aminoacyl-tRNA synthetase family. GluQ subfamily. The cofactor is Zn(2+).

Catalyzes the tRNA-independent activation of glutamate in presence of ATP and the subsequent transfer of glutamate onto a tRNA(Asp). Glutamate is transferred on the 2-amino-5-(4,5-dihydroxy-2-cyclopenten-1-yl) moiety of the queuosine in the wobble position of the QUC anticodon. This chain is Glutamyl-Q tRNA(Asp) synthetase, found in Parasynechococcus marenigrum (strain WH8102).